The chain runs to 320 residues: UPF0053 protein in cps region (320 aa).

The helical transmembrane segment at 4–24 threads the bilayer; sequence CLSFLLMIGFSLIAEGFSFII. 2 CBS domains span residues 121-183 and 186-244; these read MTSR…PLDL and LVRQ…PNEV.

It belongs to the UPF0053 family.

The protein resides in the cell membrane. This chain is UPF0053 protein in cps region, found in Klebsiella pneumoniae.